The chain runs to 55 residues: Light-harvesting polypeptide B-800/860 beta chain (55 aa).

Topologically, residues 1-21 (ADANKVWPTGLTVAEAEELHT) are cytoplasmic. The helical transmembrane segment at 22–44 (YVTNGFRVFVGIAVVAHVLVFAA) threads the bilayer. His38 contacts a bacteriochlorophyll. Topologically, residues 45–55 (HPWGRGGALVA) are periplasmic.

Belongs to the antenna complex beta subunit family. In terms of assembly, the core complex is formed by different alpha and beta chains, binding bacteriochlorophyll molecules, and arranged most probably in tetrameric structures disposed around the reaction center. The non-pigmented gamma chains may constitute additional components.

Its subcellular location is the cell inner membrane. In terms of biological role, antenna complexes are light-harvesting systems, which transfer the excitation energy to the reaction centers. The protein is Light-harvesting polypeptide B-800/860 beta chain of Rhodocyclus tenuis (Rhodospirillum tenue).